The sequence spans 423 residues: Sporulation-regulated protein 28 (423 aa).

The 315-residue stretch at 28 to 342 (KGLQLSILLL…ENYRAKVLTE (315 aa)) folds into the Septin-type G domain. Residues 38–45 (GEKGSGKS) form a G1 motif region. Residues 38–45 (GEKGSGKS), G124, 204–212 (KADGLTETE), and R291 contribute to the GTP site. The interval 121–124 (LFPG) is G3 motif. The segment at 203 to 206 (PKAD) is G4 motif. Positions 360–381 (RGSVSNVSTRRNSASRTLGNPD) are enriched in polar residues. Residues 360–385 (RGSVSNVSTRRNSASRTLGNPDTNDE) form a disordered region. Residues 384–417 (DENAYQIHKEIDEKNRIIEDYQRKIDLLEKMLAA) adopt a coiled-coil conformation.

This sequence belongs to the TRAFAC class TrmE-Era-EngA-EngB-Septin-like GTPase superfamily. Septin GTPase family. Interacts with itself. Interacts with CDC11 and SPR3; probably to form a ring at the bud neck.

Its subcellular location is the membrane. It is found in the bud neck. Functionally, septins are GTPases involved in cytokinesis that assemble into filaments and form a ring at the cleavage site. May act by recruiting MYO1 and HOF1, a protein involved in septation, to the site of cleavage. Septins are also involved in cell morphogenesis, bud site selection, chitin deposition, cell cycle regulation, cell compartmentalization and spore wall formation. The sequence is that of Sporulation-regulated protein 28 (SPR28) from Saccharomyces cerevisiae (strain ATCC 204508 / S288c) (Baker's yeast).